Here is a 329-residue protein sequence, read N- to C-terminus: (12E)-labda-8(17),12,14-triene synthase (329 aa).

Mg(2+) is bound by residues Asp-90 and Glu-95. The DDXXXE motif motif lies at 90–95; sequence DDMHGE. Arg-184 is a binding site for substrate. Residues Asn-230 and Ser-234 each contribute to the Mg(2+) site. An NXXXSXXXE motif motif is present at residues 230 to 238; that stretch reads NDLASYERE. Arg-237 contributes to the substrate binding site. Residue Glu-238 coordinates Mg(2+). 316–317 contacts substrate; that stretch reads RY.

The protein belongs to the terpene synthase family. Requires Mg(2+) as cofactor.

The catalysed reaction is (+)-copalyl diphosphate = (12E)-labda-8(17),12,14-triene + diphosphate. Its function is as follows. Involved in the biosynthesis of the mercapturic acid derivative diterpene cyslabdan A, a potentiator of the beta-lactam antibiotic imipenem. Catalyzes the conversion of (+)-copalyl diphosphate to yield labda-8(17),12(E),14-triene (biformene). The sequence is that of (12E)-labda-8(17),12,14-triene synthase from Streptomyces cyslabdanicus.